The chain runs to 202 residues: P25 protein (202 aa).

One can recognise a Flavodoxin-like domain in the interval 7–195 (VAIVIYSTYG…EIARIQGETF (189 aa)). At S181 the chain carries Phosphoserine.

It belongs to the WrbA family. As to quaternary structure, homodimer.

Functionally, unknown. Target of pap1 transcription factor. Confers brefeldin A resistance in S.pombe. The chain is P25 protein (obr1) from Schizosaccharomyces pombe (strain 972 / ATCC 24843) (Fission yeast).